Consider the following 483-residue polypeptide: NADH-quinone oxidoreductase subunit N (483 aa).

Transmembrane regions (helical) follow at residues 13 to 33 (ALPEIFVLAMVSLILVIDAAV), 39 to 57 (YLAYGLSLVTLAGAAFLTV), 76 to 96 (PLSDVLKLFLYLTVAIVLVYS), 110 to 130 (FFVLALFALLGMMVMVSASHF), 131 to 151 (LTLYLGLELLSLSLYAMVALQ), 165 to 185 (FVLGALASGMLLYGMSMVYGV), 206 to 226 (IPLVFGIVFVVAGLAFKLGAV), 240 to 260 (PTAMTLFVGSAPKIAAFAFVV), 277 to 297 (MLVILAVLSMAIGNIAAIAQS), 302 to 322 (MFAYSTISHMGFMLLGVLAGS), 330 to 350 (MFYVLVYTLMTLGGFGMILLL), 373 to 393 (LAFVMLLLMFSMTGIPPTVGF), 406 to 426 (IGYVWLAVAAVLFSLVGAFYY), and 459 to 479 (LAVLALGILPQPLMAVCVQAI).

This sequence belongs to the complex I subunit 2 family. In terms of assembly, NDH-1 is composed of 14 different subunits. Subunits NuoA, H, J, K, L, M, N constitute the membrane sector of the complex.

Its subcellular location is the cell inner membrane. The catalysed reaction is a quinone + NADH + 5 H(+)(in) = a quinol + NAD(+) + 4 H(+)(out). NDH-1 shuttles electrons from NADH, via FMN and iron-sulfur (Fe-S) centers, to quinones in the respiratory chain. The immediate electron acceptor for the enzyme in this species is believed to be ubiquinone. Couples the redox reaction to proton translocation (for every two electrons transferred, four hydrogen ions are translocated across the cytoplasmic membrane), and thus conserves the redox energy in a proton gradient. The polypeptide is NADH-quinone oxidoreductase subunit N (Thiobacillus denitrificans (strain ATCC 25259 / T1)).